The chain runs to 239 residues: 3,4-dihydroxyphthalate decarboxylase (239 aa).

Glu84 acts as the Proton donor/acceptor in catalysis. A divalent metal cation-binding residues include Glu84, His103, His105, and His171.

The protein belongs to the aldolase class II family. The cofactor is a divalent metal cation.

The enzyme catalyses 3,4-dihydroxyphthalate + H(+) = 3,4-dihydroxybenzoate + CO2. The protein operates within xenobiotic degradation; phthalate degradation. Catalyzes the decarboxylation of 3,4-dihydroxyphthalate to protocatechuate (3,4-dihydroxybenzoate) during phthalate metabolism. This Terrabacter sp. (strain DBF63) protein is 3,4-dihydroxyphthalate decarboxylase.